Here is a 301-residue protein sequence, read N- to C-terminus: Protoheme IX farnesyltransferase (301 aa).

A run of 9 helical transmembrane segments spans residues 16–36 (VVAL…PGIP), 41–61 (IQSG…AAAI), 93–113 (VFAG…VNLI), 114–134 (TAVL…VYLK), 141–161 (IVIG…AVTG), 172–192 (SLLV…LAIF), 217–237 (QILL…ATGM), 238–258 (SGVF…WYAW), and 273–293 (FGYS…DHWL).

Belongs to the UbiA prenyltransferase family. Protoheme IX farnesyltransferase subfamily.

It is found in the cell inner membrane. It catalyses the reaction heme b + (2E,6E)-farnesyl diphosphate + H2O = Fe(II)-heme o + diphosphate. It participates in porphyrin-containing compound metabolism; heme O biosynthesis; heme O from protoheme: step 1/1. In terms of biological role, converts heme B (protoheme IX) to heme O by substitution of the vinyl group on carbon 2 of heme B porphyrin ring with a hydroxyethyl farnesyl side group. The chain is Protoheme IX farnesyltransferase from Xylella fastidiosa (strain 9a5c).